We begin with the raw amino-acid sequence, 111 residues long: Nucleoid-associated protein Ppha_1174 (111 aa).

This sequence belongs to the YbaB/EbfC family. Homodimer.

The protein localises to the cytoplasm. Its subcellular location is the nucleoid. Binds to DNA and alters its conformation. May be involved in regulation of gene expression, nucleoid organization and DNA protection. This is Nucleoid-associated protein Ppha_1174 from Pelodictyon phaeoclathratiforme (strain DSM 5477 / BU-1).